We begin with the raw amino-acid sequence, 71 residues long: Small ribosomal subunit protein bS21 (71 aa).

It belongs to the bacterial ribosomal protein bS21 family.

The chain is Small ribosomal subunit protein bS21 from Pseudoalteromonas atlantica (strain T6c / ATCC BAA-1087).